A 207-amino-acid chain; its full sequence is Protein GrpE (207 aa).

Basic and acidic residues predominate over residues 1-11 (MTETDGQKDNN). The tract at residues 1–39 (MTETDGQKDNNQDTAQAAADPVVSKPYIMPDDPEEGSNE) is disordered.

Belongs to the GrpE family. Homodimer.

Its subcellular location is the cytoplasm. Functionally, participates actively in the response to hyperosmotic and heat shock by preventing the aggregation of stress-denatured proteins, in association with DnaK and GrpE. It is the nucleotide exchange factor for DnaK and may function as a thermosensor. Unfolded proteins bind initially to DnaJ; upon interaction with the DnaJ-bound protein, DnaK hydrolyzes its bound ATP, resulting in the formation of a stable complex. GrpE releases ADP from DnaK; ATP binding to DnaK triggers the release of the substrate protein, thus completing the reaction cycle. Several rounds of ATP-dependent interactions between DnaJ, DnaK and GrpE are required for fully efficient folding. The protein is Protein GrpE of Rhodopseudomonas palustris (strain TIE-1).